The primary structure comprises 511 residues: Cobyric acid synthase (511 aa).

A GATase cobBQ-type domain is found at 251 to 443 (LLDIAIICLP…IHGIFDNDVF (193 aa)). Cysteine 332 acts as the Nucleophile in catalysis. Histidine 435 is a catalytic residue.

It belongs to the CobB/CobQ family. CobQ subfamily.

It participates in cofactor biosynthesis; adenosylcobalamin biosynthesis. Its function is as follows. Catalyzes amidations at positions B, D, E, and G on adenosylcobyrinic A,C-diamide. NH(2) groups are provided by glutamine, and one molecule of ATP is hydrogenolyzed for each amidation. This chain is Cobyric acid synthase, found in Listeria monocytogenes serotype 4b (strain F2365).